Here is a 373-residue protein sequence, read N- to C-terminus: MSDNSQKKVIVGMSGGVDSSVSAYLLQQQGYQVAGLFMKNWEEDDGEEYCSAATDLADAQAVCDKLGMELHTVNFAAEYWDNVFELFLEEYKAGRTPNPDILCNKEIKFKAFLEFAAEDLGADYIATGHYVRRQDVNGKSRLLRGLDGNKDQSYFLYTLSHEQLAQSLFPVGELEKPEVRRIAEQLELVTAKKKDSTGICFIGERKFRDFLGRYLPAQPGPIMTVDGQHVGEHQGLMYHTLGQRKGLGIGGTKEGGDDPWYVVDKDVANNILLVAQGHEHPRLMSVGLIAQQLHWVDREPVTAAFRCVVKTRYRQQDIPCTVTPLDDERVEVRFDDPVAAVTPGQSAVFYQGEVCLGGGIIEERYPLPGSVAN.

Residues 12 to 19 (GMSGGVDS) and M38 each bind ATP. The interaction with target base in tRNA stretch occupies residues 98-100 (NPD). C103 acts as the Nucleophile in catalysis. C103 and C200 are oxidised to a cystine. G128 is an ATP binding site. Positions 150–152 (KDQ) are interaction with tRNA. The active-site Cysteine persulfide intermediate is C200. The interval 312-313 (RY) is interaction with tRNA.

Belongs to the MnmA/TRMU family. In terms of assembly, interacts with TusE.

The protein resides in the cytoplasm. It catalyses the reaction S-sulfanyl-L-cysteinyl-[protein] + uridine(34) in tRNA + AH2 + ATP = 2-thiouridine(34) in tRNA + L-cysteinyl-[protein] + A + AMP + diphosphate + H(+). Functionally, catalyzes the 2-thiolation of uridine at the wobble position (U34) of tRNA(Lys), tRNA(Glu) and tRNA(Gln), leading to the formation of s(2)U34, the first step of tRNA-mnm(5)s(2)U34 synthesis. Sulfur is provided by IscS, via a sulfur-relay system. Binds ATP and its substrate tRNAs. This is tRNA-specific 2-thiouridylase MnmA from Yersinia enterocolitica serotype O:8 / biotype 1B (strain NCTC 13174 / 8081).